A 297-amino-acid chain; its full sequence is uncharacterized protein (297 aa).

Residues 175 to 199 (VLPTNRNNPVRSNVDIKPVNPPSSK) are disordered. The span at 176 to 185 (LPTNRNNPVR) shows a compositional bias: polar residues. Asn-269 carries an N-linked (GlcNAc...) asparagine; by host glycan. A helical membrane pass occupies residues 277 to 297 (LFGSPVLLICVASLLLLIIIL).

This sequence belongs to the ascovirus HvAV ORF18 family.

It is found in the membrane. This is an uncharacterized protein from Noctuidae (owlet moths).